A 2602-amino-acid polypeptide reads, in one-letter code: Filamin-B (2602 aa).

The interval M1–K239 is actin-binding. 2 Calponin-homology (CH) domains span residues K16–S122 and Q139–L242. T216 carries the phosphothreonine modification. Residues P244 to T267 form a disordered region. Filamin repeat units lie at residues K249 to V347, K349 to I446, G447 to V543, G544 to I636, T640 to I736, G737 to V839, D840 to V938, A939 to A1034, S1035 to I1127, E1128 to V1222, E1223 to V1322, T1323 to S1415, K1416 to V1511, L1512 to A1608, and T1609 to A1704. The residue at position 519 (T519) is a Phosphothreonine. The residue at position 681 (K681) is an N6-acetyllysine. A Phosphoserine modification is found at S730. Residues V837–A850 show a composition bias toward basic and acidic residues. A disordered region spans residues V837–N862. 4 positions are modified to phosphoserine: S886, S932, S983, and S1028. Position 1307 is a phosphothreonine (T1307). S1316 carries the phosphoserine modification. Residues S1433, S1505, and S1602 each carry the phosphoserine modification. Residues T1705–V1728 form a hinge 1 region. Filamin repeat units lie at residues T1729–Q1813, V1816–I1908, K1919–V1994, S1997–I2089, G2091–V2185, L2188–V2280, A2282–V2375, and G2379–V2471. K1780 is modified (N6-acetyllysine). 2 positions are modified to phosphoserine: S2083 and S2113. Phosphoserine occurs at positions 2369 and 2465. A Glycyl lysine isopeptide (Lys-Gly) (interchain with G-Cter in ISG15) cross-link involves residue K2468. The tract at residues T2472–P2506 is hinge 2. A self-association site, tail region spans residues T2472 to P2602. Phosphoserine is present on residues S2478, S2481, and S2492. Residues K2507–V2601 form a Filamin 24 repeat. N6-succinyllysine occurs at positions 2518 and 2524. N6-acetyllysine is present on K2576.

This sequence belongs to the filamin family. In terms of assembly, homodimer. Interacts with FLNA, FLNC, INPPL1, ITGB1A, ITGB1D, ITGB3, ITGB6, MYOT, MYOZ1, PSEN1 and PSEN2. Interacts with MICALL2. Interacts with RFLNA and RFLNB. Interacts with ASB2 isoform 1; the interaction targets FLNB for proteasomal degradation. Post-translationally, ISGylation prevents ability to interact with the upstream activators of the JNK cascade and inhibits IFNA-induced JNK signaling. In terms of processing, ubiquitination by a SCF-like complex containing ASB2 isoform 1 leads to proteasomal degradation which promotes muscle differentiation. Expressed in hippocampus, cortex, cerebellar Purkinje cells and granule cell layers.

Its subcellular location is the cytoplasm. The protein resides in the cell cortex. The protein localises to the cytoskeleton. It localises to the stress fiber. It is found in the myofibril. Its subcellular location is the sarcomere. The protein resides in the z line. In terms of biological role, connects cell membrane constituents to the actin cytoskeleton. May promote orthogonal branching of actin filaments and links actin filaments to membrane glycoproteins. Anchors various transmembrane proteins to the actin cytoskeleton. The chain is Filamin-B (Flnb) from Mus musculus (Mouse).